The chain runs to 82 residues: MVVIRMARGGAKKRPFYRIVVADKRSPRDGRFIEKLGFFNPLAKGGEERLKLDVAKAEAWLAKGAQPSDRVASLIKEAKKAA.

This sequence belongs to the bacterial ribosomal protein bS16 family.

The chain is Small ribosomal subunit protein bS16 from Francisella tularensis subsp. tularensis (strain FSC 198).